Reading from the N-terminus, the 377-residue chain is Queuine tRNA-ribosyltransferase (377 aa).

D89 serves as the catalytic Proton acceptor. Residues 89–93 (DSGGF), D143, Q188, and G215 contribute to the substrate site. Residues 246-252 (GVGKPED) form an RNA binding region. D265 (nucleophile) is an active-site residue. The RNA binding; important for wobble base 34 recognition stretch occupies residues 270–274 (TRNAR). Zn(2+) is bound by residues C303, C305, C308, and H334.

Belongs to the queuine tRNA-ribosyltransferase family. Homodimer. Within each dimer, one monomer is responsible for RNA recognition and catalysis, while the other monomer binds to the replacement base PreQ1. Zn(2+) serves as cofactor.

It carries out the reaction 7-aminomethyl-7-carbaguanine + guanosine(34) in tRNA = 7-aminomethyl-7-carbaguanosine(34) in tRNA + guanine. The protein operates within tRNA modification; tRNA-queuosine biosynthesis. Its function is as follows. Catalyzes the base-exchange of a guanine (G) residue with the queuine precursor 7-aminomethyl-7-deazaguanine (PreQ1) at position 34 (anticodon wobble position) in tRNAs with GU(N) anticodons (tRNA-Asp, -Asn, -His and -Tyr). Catalysis occurs through a double-displacement mechanism. The nucleophile active site attacks the C1' of nucleotide 34 to detach the guanine base from the RNA, forming a covalent enzyme-RNA intermediate. The proton acceptor active site deprotonates the incoming PreQ1, allowing a nucleophilic attack on the C1' of the ribose to form the product. After dissociation, two additional enzymatic reactions on the tRNA convert PreQ1 to queuine (Q), resulting in the hypermodified nucleoside queuosine (7-(((4,5-cis-dihydroxy-2-cyclopenten-1-yl)amino)methyl)-7-deazaguanosine). This Acinetobacter baumannii (strain SDF) protein is Queuine tRNA-ribosyltransferase.